The chain runs to 432 residues: EF-hand calcium-binding domain-containing protein 3 (432 aa).

2 consecutive EF-hand domains span residues 45-80 (AQLEAFRNAYNFFTKDRTGCIDSHGLMSTVAKLGMN) and 81-116 (LNAYDIYNELKCADRDRDGKINFSDFIDVLTDKKLF). Residues D94, D96, D98, K100, and D105 each contribute to the Ca(2+) site. Position 273 is a phosphotyrosine (Y273). The tract at residues 394 to 432 (NVNKTSPSNSGLSSPSDLSESDPETGRKRKRKSSRGFRQ) is disordered. The span at 399 to 411 (SPSNSGLSSPSDL) shows a compositional bias: low complexity. Positions 420-432 (RKRKRKSSRGFRQ) are enriched in basic residues.

This Rattus norvegicus (Rat) protein is EF-hand calcium-binding domain-containing protein 3 (Efcab3).